The following is a 331-amino-acid chain: GTP 3',8-cyclase (331 aa).

Positions P6–P231 constitute a Radical SAM core domain. R15 provides a ligand contact to GTP. C22 and C26 together coordinate [4Fe-4S] cluster. Y28 is an S-adenosyl-L-methionine binding site. Residue C29 coordinates [4Fe-4S] cluster. R64 contacts GTP. G68 provides a ligand contact to S-adenosyl-L-methionine. Position 98 (T98) interacts with GTP. S122 is an S-adenosyl-L-methionine binding site. K158 contacts GTP. M192 lines the S-adenosyl-L-methionine pocket. Positions 255 and 258 each coordinate [4Fe-4S] cluster. A GTP-binding site is contributed by R260 to R262. C272 serves as a coordination point for [4Fe-4S] cluster.

The protein belongs to the radical SAM superfamily. MoaA family. Monomer and homodimer. Requires [4Fe-4S] cluster as cofactor.

It carries out the reaction GTP + AH2 + S-adenosyl-L-methionine = (8S)-3',8-cyclo-7,8-dihydroguanosine 5'-triphosphate + 5'-deoxyadenosine + L-methionine + A + H(+). It functions in the pathway cofactor biosynthesis; molybdopterin biosynthesis. Its function is as follows. Catalyzes the cyclization of GTP to (8S)-3',8-cyclo-7,8-dihydroguanosine 5'-triphosphate. The polypeptide is GTP 3',8-cyclase (Mesorhizobium japonicum (strain LMG 29417 / CECT 9101 / MAFF 303099) (Mesorhizobium loti (strain MAFF 303099))).